The primary structure comprises 359 residues: Peptide chain release factor 1 (359 aa).

N5-methylglutamine is present on Q234.

It belongs to the prokaryotic/mitochondrial release factor family. In terms of processing, methylated by PrmC. Methylation increases the termination efficiency of RF1.

The protein localises to the cytoplasm. In terms of biological role, peptide chain release factor 1 directs the termination of translation in response to the peptide chain termination codons UAG and UAA. The chain is Peptide chain release factor 1 from Clavibacter michiganensis subsp. michiganensis (strain NCPPB 382).